The primary structure comprises 128 residues: Protein Wnt-8 (128 aa).

Residue serine 1 is the site of O-palmitoleoyl serine attachment. Disulfide bonds link cysteine 69/cysteine 109 and cysteine 85/cysteine 102. Asparagine 72 carries an N-linked (GlcNAc...) asparagine glycan.

Belongs to the Wnt family. Palmitoleoylation is required for efficient binding to frizzled receptors. Depalmitoleoylation leads to Wnt signaling pathway inhibition. In terms of processing, proteolytic processing by tiki1 and tiki2 promotes oxidation and formation of large disulfide-bond oligomers, leading to inactivation of wnt8.

The protein localises to the secreted. The protein resides in the extracellular space. Its subcellular location is the extracellular matrix. Its function is as follows. Ligand for members of the frizzled family of seven transmembrane receptors. Probable developmental protein. May be a signaling molecule which affects the development of discrete regions of tissues. Is likely to signal over only few cell diameters. The protein is Protein Wnt-8 (WNT-8) of Evasterias troschelii (Mottled sea star).